A 314-amino-acid polypeptide reads, in one-letter code: CBASS oligonucleotide cyclase CdnC (314 aa).

Lysine 60 is a binding site for ATP. Positions 73 and 75 each coordinate Mg(2+). ATP-binding positions include aspartate 75, lysine 186, 197-199, and asparagine 263; that span reads KSF.

The protein belongs to the CD-NTase family. C01 subfamily. Forms complexes with Cap7 with 1:1 and 2:2 stoichimetry, and a 1:1:6 CdnC:Cap7:Cap6 complex. Mg(2+) serves as cofactor.

Cyclic nucleotide synthase (second messenger synthase) of a CBASS antivirus system. CBASS (cyclic oligonucleotide-based antiphage signaling system) provides immunity against bacteriophage. The CD-NTase protein synthesizes cyclic nucleotides in response to infection; these serve as specific second messenger signals. The signals activate a diverse range of effectors, leading to bacterial cell death and thus abortive phage infection. A type III CBASS system. Expression of this CBASS system (Cap18-Cap6-Cap7-CdnC-CapW-Cap17) in a susceptible E.coli (strain MG1655) confers resistance to bacteriophage P1. Probable cyclic nucleotide synthase that upon activation catalyzes the synthesis of a cyclic nucleotide. A cyclase activity for this enzyme was not identified in. In Escherichia coli (strain KTE188), this protein is CBASS oligonucleotide cyclase CdnC.